The sequence spans 388 residues: Type II secretion system protein F (388 aa).

Residues Met-1–Thr-28 form a disordered region. Topologically, residues Met-1 to Met-153 are cytoplasmic. Ca(2+) is bound by residues Glu-79, Asn-133, and Asp-137. A helical transmembrane segment spans residues Ile-154–Val-174. Topologically, residues Val-175 to His-205 are periplasmic. The chain crosses the membrane as a helical span at residues Tyr-206–Thr-226. Topologically, residues Asp-227–Asn-350 are cytoplasmic. Residues Ile-351–Ile-371 traverse the membrane as a helical segment. Residues Val-372–Leu-388 lie on the Periplasmic side of the membrane.

Belongs to the GSP F family. As to quaternary structure, type II secretion system is composed of four main components: the outer membrane complex, the inner membrane complex, the cytoplasmic secretion ATPase and the periplasm-spanning pseudopilus. Homodimer. Interacts with ExeE and ExeL components.

Its subcellular location is the cell inner membrane. Functionally, component of the type II secretion system inner membrane complex required for the energy-dependent secretion of extracellular factors such as proteases and toxins from the periplasm. The sequence is that of Type II secretion system protein F (exeF) from Aeromonas hydrophila.